Consider the following 1025-residue polypeptide: Multidrug resistance protein MdtC (1025 aa).

12 consecutive transmembrane segments (helical) span residues 3–23 (FFAL…AITL), 333–353 (EVEQ…FLFL), 360–380 (IIPA…MYLC), 387–407 (LSLM…IVVL), 431–451 (VGFT…PLLL), 463–483 (FAVT…TLTP), 528–548 (LVGV…ISIP), 853–873 (VILI…LYES), 875–895 (VHPL…LLAL), 897–917 (LFNA…IGIV), 953–973 (PIMM…LSGG), and 984–1004 (ITIV…TPVV).

The protein belongs to the resistance-nodulation-cell division (RND) (TC 2.A.6) family. MdtC subfamily. Part of a tripartite efflux system composed of MdtA, MdtB and MdtC. MdtC forms a heteromultimer with MdtB.

Its subcellular location is the cell inner membrane. The MdtABC tripartite complex confers resistance against novobiocin and deoxycholate. The polypeptide is Multidrug resistance protein MdtC (Escherichia coli (strain UTI89 / UPEC)).